The chain runs to 125 residues: Oxytocin-neurophysin 1 (125 aa).

The N-terminal stretch at methionine 1–alanine 19 is a signal peptide. The cysteines at positions 20 and 25 are disulfide-linked. Glycine amide is present on glycine 28. 7 disulfides stabilise this stretch: cysteine 41–cysteine 85, cysteine 44–cysteine 58, cysteine 52–cysteine 75, cysteine 59–cysteine 65, cysteine 92–cysteine 104, cysteine 98–cysteine 116, and cysteine 105–cysteine 110.

Belongs to the vasopressin/oxytocin family. Interacts with oxytocin receptor (Ki=1.5 nM). Interacts with vasopressin V1aR/AVPR1A (Ki=37 nM), V1bR/AVPR1B (Ki=222 nM) and V2R/AVPR2 receptors (Ki=823 nM).

Its subcellular location is the secreted. Neurophysin 1 specifically binds oxytocin. In terms of biological role, oxytocin causes contraction of the smooth muscle of the uterus and of the mammary gland. Acts by binding to oxytocin receptor (OXTR). This Homo sapiens (Human) protein is Oxytocin-neurophysin 1 (OXT).